Here is a 360-residue protein sequence, read N- to C-terminus: NAD(P)H-quinone oxidoreductase subunit 1, chloroplastic (360 aa).

Helical transmembrane passes span 30–50 (FLPI…LVWL), 98–118 (FSIG…VIPF), 127–147 (FNIG…GLLM), 165–185 (AAQS…ISLL), 203–223 (FWGW…ISSL), 253–273 (FGLF…FVTV), 297–317 (IFGT…FLFI), and 340–360 (FLLP…VFSL).

This sequence belongs to the complex I subunit 1 family. NDH is composed of at least 16 different subunits, 5 of which are encoded in the nucleus.

It is found in the plastid. Its subcellular location is the chloroplast thylakoid membrane. It carries out the reaction a plastoquinone + NADH + (n+1) H(+)(in) = a plastoquinol + NAD(+) + n H(+)(out). The enzyme catalyses a plastoquinone + NADPH + (n+1) H(+)(in) = a plastoquinol + NADP(+) + n H(+)(out). Functionally, NDH shuttles electrons from NAD(P)H:plastoquinone, via FMN and iron-sulfur (Fe-S) centers, to quinones in the photosynthetic chain and possibly in a chloroplast respiratory chain. The immediate electron acceptor for the enzyme in this species is believed to be plastoquinone. Couples the redox reaction to proton translocation, and thus conserves the redox energy in a proton gradient. The chain is NAD(P)H-quinone oxidoreductase subunit 1, chloroplastic from Aethionema cordifolium (Lebanon stonecress).